The chain runs to 258 residues: Acyl-[acyl-carrier-protein]--UDP-N-acetylglucosamine O-acyltransferase (258 aa).

Belongs to the transferase hexapeptide repeat family. LpxA subfamily. As to quaternary structure, homotrimer.

It localises to the cytoplasm. The catalysed reaction is a (3R)-hydroxyacyl-[ACP] + UDP-N-acetyl-alpha-D-glucosamine = a UDP-3-O-[(3R)-3-hydroxyacyl]-N-acetyl-alpha-D-glucosamine + holo-[ACP]. It functions in the pathway glycolipid biosynthesis; lipid IV(A) biosynthesis; lipid IV(A) from (3R)-3-hydroxytetradecanoyl-[acyl-carrier-protein] and UDP-N-acetyl-alpha-D-glucosamine: step 1/6. Functionally, involved in the biosynthesis of lipid A, a phosphorylated glycolipid that anchors the lipopolysaccharide to the outer membrane of the cell. The protein is Acyl-[acyl-carrier-protein]--UDP-N-acetylglucosamine O-acyltransferase of Myxococcus xanthus (strain DK1622).